The chain runs to 506 residues: Maturase K (506 aa).

The protein belongs to the intron maturase 2 family. MatK subfamily.

The protein resides in the plastid. The protein localises to the chloroplast. In terms of biological role, usually encoded in the trnK tRNA gene intron. Probably assists in splicing its own and other chloroplast group II introns. This chain is Maturase K, found in Lathyrus tingitanus (Tangier pea).